The sequence spans 416 residues: D-amino acid dehydrogenase (416 aa).

Ile3–Tyr17 contributes to the FAD binding site.

Belongs to the DadA oxidoreductase family. It depends on FAD as a cofactor.

It catalyses the reaction a D-alpha-amino acid + A + H2O = a 2-oxocarboxylate + AH2 + NH4(+). Functionally, oxidative deamination of D-amino acids. The protein is D-amino acid dehydrogenase of Brucella suis biovar 1 (strain 1330).